We begin with the raw amino-acid sequence, 398 residues long: Acetate kinase (398 aa).

Asn-7 contacts Mg(2+). Lys-14 serves as a coordination point for ATP. Substrate is bound at residue Arg-91. The active-site Proton donor/acceptor is Asp-148. Residues 208-212 (HLGNG), 283-285 (DSR), and 331-335 (GIGEN) contribute to the ATP site. Glu-384 serves as a coordination point for Mg(2+).

It belongs to the acetokinase family. As to quaternary structure, homodimer. The cofactor is Mg(2+). Mn(2+) serves as cofactor.

Its subcellular location is the cytoplasm. It carries out the reaction acetate + ATP = acetyl phosphate + ADP. It functions in the pathway metabolic intermediate biosynthesis; acetyl-CoA biosynthesis; acetyl-CoA from acetate: step 1/2. In terms of biological role, catalyzes the formation of acetyl phosphate from acetate and ATP. Can also catalyze the reverse reaction. The polypeptide is Acetate kinase (Halothermothrix orenii (strain H 168 / OCM 544 / DSM 9562)).